The following is a 370-amino-acid chain: Ubiquinone biosynthesis O-methyltransferase, mitochondrial (370 aa).

The transit peptide at 1-86 (MWRGGRLGSR…TYRTPWKRLY (86 aa)) directs the protein to the mitochondrion. Residue R125 participates in S-adenosyl-L-methionine binding. N6-acetyllysine is present on residues K144 and K150. Residues G155 and D176 each contribute to the S-adenosyl-L-methionine site. K197 carries the post-translational modification N6-acetyllysine. Position 223 (S223) interacts with S-adenosyl-L-methionine. Mg(2+) is bound by residues E224, E227, and H228. The disordered stretch occupies residues 336 to 370 (AQEHQEPAESALKGETGALHANTSGSPSVREEQRT).

It belongs to the class I-like SAM-binding methyltransferase superfamily. UbiG/COQ3 family. In terms of assembly, component of a multi-subunit COQ enzyme complex, composed of at least COQ3, COQ4, COQ5, COQ6, COQ7 and COQ9. It depends on Mg(2+) as a cofactor.

The protein localises to the mitochondrion inner membrane. The catalysed reaction is 3,4-dihydroxy-5-(all-trans-decaprenyl)benzoate + S-adenosyl-L-methionine = 4-hydroxy-3-methoxy-5-(all-trans-decaprenyl)benzoate + S-adenosyl-L-homocysteine + H(+). The enzyme catalyses a 3-demethylubiquinone + S-adenosyl-L-methionine = a ubiquinone + S-adenosyl-L-homocysteine. It carries out the reaction 3-demethylubiquinol-10 + S-adenosyl-L-methionine = ubiquinol-10 + S-adenosyl-L-homocysteine + H(+). Its pathway is cofactor biosynthesis; ubiquinone biosynthesis. Its function is as follows. O-methyltransferase required for two non-consecutive steps during ubiquinone biosynthesis. Catalyzes the 2 O-methylation of 3,4-dihydroxy-5-(all-trans-decaprenyl)benzoic acid into 4-hydroxy-3-methoxy-5-(all-trans-decaprenyl)benzoic acid. Also catalyzes the last step of ubiquinone biosynthesis by mediating methylation of 3-demethylubiquinone into ubiquinone. Also able to mediate the methylation of 3-demethylubiquinol-10 into ubiquinol-10. The sequence is that of Ubiquinone biosynthesis O-methyltransferase, mitochondrial from Mus musculus (Mouse).